A 792-amino-acid chain; its full sequence is Alpha-1,6-mannosylglycoprotein 6-beta-N-acetylglucosaminyltransferase B (792 aa).

At Met1–Leu24 the chain is on the cytoplasmic side. A helical; Signal-anchor for type II membrane protein membrane pass occupies residues Phe25–Phe45. At Ser46–Leu792 the chain is on the lumenal side. A glycan (N-linked (GlcNAc...) asparagine) is linked at Asn127. Cystine bridges form between Cys157–Cys195, Cys168–Cys208, Cys184–Cys353, Cys387–Cys644, Cys700–Cys775, Cys704–Cys777, Cys711–Cys764, Cys732–Cys753, and Cys788–Cys791.

This sequence belongs to the glycosyltransferase 18 family. It depends on Mn(2+) as a cofactor. In terms of tissue distribution, predominantly expressed in brain. Expressed in all areas of the adult and fetal brain. Also expressed at much lower levels in testis, spleen and thymus.

Its subcellular location is the golgi apparatus membrane. The enzyme catalyses N(4)-{beta-D-GlcNAc-(1-&gt;2)-[beta-D-GlcNAc-(1-&gt;4)]-alpha-D-Man-(1-&gt;3)-[beta-D-GlcNAc-(1-&gt;2)-alpha-D-Man-(1-&gt;6)]-beta-D-Man-(1-&gt;4)-beta-D-GlcNAc-(1-&gt;4)-beta-D-GlcNAc}-L-asparaginyl-[protein] + UDP-N-acetyl-alpha-D-glucosamine = N(4)-{beta-D-GlcNAc-(1-&gt;2)-[beta-D-GlcNAc-(1-&gt;4)]-alpha-D-Man-(1-&gt;3)-[beta-D-GlcNAc-(1-&gt;2)-[beta-D-GlcNAc-(1-&gt;6)]-alpha-D-Man-(1-&gt;6)]-beta-D-Man-(1-&gt;4)-beta-D-GlcNAc-(1-&gt;4)-beta-D-GlcNAc}-L-asparaginyl-[protein] + UDP + H(+). It catalyses the reaction 3-O-[N-acetyl-beta-D-glucosaminyl-(1-&gt;2)-alpha-D-mannosyl]-L-seryl-[protein] + UDP-N-acetyl-alpha-D-glucosamine = O(3)-{N-acetyl-beta-D-glucosaminyl-(1-&gt;2)-[N-acetyl-beta-D-glucosaminyl-(1-&gt;6)]-alpha-D-mannosyl}-L-seryl-[protein] + UDP + H(+). It carries out the reaction 3-O-[N-acetyl-beta-D-glucosaminyl-(1-&gt;2)-alpha-D-mannosyl]-L-threonyl-[protein] + UDP-N-acetyl-alpha-D-glucosamine = O(3)-{N-acetyl-beta-D-glucosaminyl-(1-&gt;2)-[N-acetyl-beta-D-glucosaminyl-(1-&gt;6)]-alpha-D-mannosyl}-L-threonyl-[protein] + UDP + H(+). It functions in the pathway protein modification; protein glycosylation. Functionally, glycosyltransferase that acts on alpha-linked mannose of N-glycans and O-mannosyl glycans. Catalyzes the transfer of N-acetylglucosamine (GlcNAc) to the beta 1-6 linkage of the mannose residue of GlcNAc-beta1,2-Man-alpha on both the alpha1,3- and alpha1,6-linked mannose arms in the core structure of N-glycan. Also acts on the GlcNAc-beta1,2-Man-alpha1-Ser/Thr moiety, forming a 2,6-branched structure in brain O-mannosyl glycan. Plays an active role in modulating integrin and laminin-dependent adhesion and migration of neuronal cells via its activity in the O-mannosyl glycan pathway. The sequence is that of Alpha-1,6-mannosylglycoprotein 6-beta-N-acetylglucosaminyltransferase B (MGAT5B) from Homo sapiens (Human).